The primary structure comprises 646 residues: Lipoteichoic acid synthase (646 aa).

Over 1–7 (MKLHKKK) the chain is Cytoplasmic. A helical transmembrane segment spans residues 8–28 (LTLFAFFILTVLTVTLKTYFS). Topologically, residues 29 to 43 (YYVDFSLGVKGLVQN) are extracellular. The helical transmembrane segment at 44–64 (LILLMNPYSLIALVLSIFLFF) threads the bilayer. Residues 65–68 (KGKK) lie on the Cytoplasmic side of the membrane. The chain crosses the membrane as a helical span at residues 69 to 89 (AFWFIFIGGFILTFLLYANVV). The Extracellular segment spans residues 90-119 (YFRFFSDFLTFSTLNQAGNVESMGGAVTAS). The helical transmembrane segment at 120–140 (FKWYDFVYFIDTIIYLFVLIF) threads the bilayer. Topologically, residues 141 to 153 (KQKWLDKRVFSKK) are cytoplasmic. A helical membrane pass occupies residues 154–174 (FVPVVMAASIALFFLNLAFAE). The Extracellular portion of the chain corresponds to 175-646 (SDRPELLTRT…KTGPKGQERK (472 aa)). Mn(2+) contacts are provided by E255 and T300. T300 is an active-site residue. H416 contributes to the substrate binding site. Mn(2+) is bound by residues D475 and H476. The tract at residues 579 to 646 (IYDNKNNEPM…KTGPKGQERK (68 aa)) is disordered. Basic and acidic residues-rich tracts occupy residues 580–607 (YDNK…KDLQ) and 625–646 (DFDK…QERK).

The protein belongs to the LTA synthase family. Post-translationally, proteolytically cleaved.

It is found in the cell membrane. The protein localises to the secreted. Its pathway is cell wall biogenesis; lipoteichoic acid biosynthesis. Its function is as follows. Catalyzes the polymerization of lipoteichoic acid (LTA) polyglycerol phosphate, a reaction that presumably uses phosphatidylglycerol (PG) as substrate. Is required for staphylococcal growth and cell division process. This Staphylococcus saprophyticus subsp. saprophyticus (strain ATCC 15305 / DSM 20229 / NCIMB 8711 / NCTC 7292 / S-41) protein is Lipoteichoic acid synthase (ltaS).